A 286-amino-acid chain; its full sequence is 3-hydroxyanthranilate 3,4-dioxygenase (286 aa).

The interval 1–160 (MERCVRVKSW…SEQYRTGKPN (160 aa)) is domain A (catalytic). Arginine 43 is a binding site for O2. Histidine 47, glutamate 53, and histidine 91 together coordinate Fe cation. Glutamate 53 is a binding site for substrate. Substrate contacts are provided by arginine 95 and glutamate 105. Positions 161–177 (PDQLLKEPPFPLSTRSV) are linker. The domain B stretch occupies residues 178-286 (MEPMSLKAWL…QDPACKKPLG (109 aa)).

The protein belongs to the 3-HAO family. In terms of assembly, monomer. It depends on Fe(2+) as a cofactor.

It is found in the cytoplasm. It localises to the cytosol. It catalyses the reaction 3-hydroxyanthranilate + O2 = (2Z,4Z)-2-amino-3-carboxymuconate 6-semialdehyde. It participates in cofactor biosynthesis; NAD(+) biosynthesis; quinolinate from L-kynurenine: step 3/3. In terms of biological role, catalyzes the oxidative ring opening of 3-hydroxyanthranilate to 2-amino-3-carboxymuconate semialdehyde, which spontaneously cyclizes to quinolinate. The chain is 3-hydroxyanthranilate 3,4-dioxygenase (Haao) from Rattus norvegicus (Rat).